Reading from the N-terminus, the 327-residue chain is tRNA dimethylallyltransferase (327 aa).

Glycine 14–threonine 21 serves as a coordination point for ATP. Threonine 16–threonine 21 contacts substrate. 2 interaction with substrate tRNA regions span residues aspartate 39–leucine 42 and glutamine 163–arginine 167.

Belongs to the IPP transferase family. As to quaternary structure, monomer. It depends on Mg(2+) as a cofactor.

It carries out the reaction adenosine(37) in tRNA + dimethylallyl diphosphate = N(6)-dimethylallyladenosine(37) in tRNA + diphosphate. Its function is as follows. Catalyzes the transfer of a dimethylallyl group onto the adenine at position 37 in tRNAs that read codons beginning with uridine, leading to the formation of N6-(dimethylallyl)adenosine (i(6)A). In Xanthomonas axonopodis pv. citri (strain 306), this protein is tRNA dimethylallyltransferase.